The primary structure comprises 201 residues: Phosphoheptose isomerase 2 (201 aa).

An SIS domain is found at 39–198 (VIKAYKNGNK…EEELFGKGFS (160 aa)). 54-56 (NGG) serves as a coordination point for substrate. 2 residues coordinate Zn(2+): His63 and Glu67. Residues Glu67, 96 to 97 (ND), 122 to 124 (STS), Ser127, and Gln174 each bind substrate. Zn(2+) contacts are provided by Gln174 and His182.

This sequence belongs to the SIS family. GmhA subfamily. In terms of assembly, homotetramer. Zn(2+) is required as a cofactor.

It is found in the cytoplasm. It carries out the reaction 2 D-sedoheptulose 7-phosphate = D-glycero-alpha-D-manno-heptose 7-phosphate + D-glycero-beta-D-manno-heptose 7-phosphate. Its pathway is carbohydrate biosynthesis; D-glycero-D-manno-heptose 7-phosphate biosynthesis; D-glycero-alpha-D-manno-heptose 7-phosphate and D-glycero-beta-D-manno-heptose 7-phosphate from sedoheptulose 7-phosphate: step 1/1. It functions in the pathway capsule biogenesis; capsule polysaccharide biosynthesis. Functionally, catalyzes the isomerization of sedoheptulose 7-phosphate in D-glycero-D-manno-heptose 7-phosphate. No activity with L-galacto-heptulose, L-galacto-heptulose 7-phosphate or D-manno-heptulose. In Campylobacter jejuni subsp. jejuni serotype O:2 (strain ATCC 700819 / NCTC 11168), this protein is Phosphoheptose isomerase 2.